Reading from the N-terminus, the 106-residue chain is Nucleoid-associated protein XOO1065 (106 aa).

Basic and acidic residues predominate over residues 80-89 (KIDAESKDRM). Residues 80-106 (KIDAESKDRMGSATAGMQLPPGMKLPF) form a disordered region.

The protein belongs to the YbaB/EbfC family. Homodimer.

Its subcellular location is the cytoplasm. It localises to the nucleoid. Functionally, binds to DNA and alters its conformation. May be involved in regulation of gene expression, nucleoid organization and DNA protection. The sequence is that of Nucleoid-associated protein XOO1065 from Xanthomonas oryzae pv. oryzae (strain KACC10331 / KXO85).